Reading from the N-terminus, the 112-residue chain is UPF0102 protein C8J_0145 (112 aa).

This sequence belongs to the UPF0102 family.

This is UPF0102 protein C8J_0145 from Campylobacter jejuni subsp. jejuni serotype O:6 (strain 81116 / NCTC 11828).